Reading from the N-terminus, the 1210-residue chain is AF4/FMR2 family member 1 (1210 aa).

Disordered regions lie at residues 1–45 (MAAQ…GEPY), 73–314 (TKSH…KPLP), 366–957 (SWPP…KPQV), and 1098–1119 (TGTP…SQSS). Composition is skewed to basic and acidic residues over residues 9 to 35 (NDDR…EAFP) and 78 to 87 (HRLDASENRL). Phosphoserine is present on residues serine 199, serine 206, and serine 212. Residues 215–238 (HSNQQTLPRTQGSSKVHGSSNNSK) show a composition bias toward polar residues. Threonine 220 is subject to Phosphothreonine. The segment covering 245–259 (SPKDLAVKVHDKETP) has biased composition (basic and acidic residues). Positions 267–279 (AQPPSQTFPPPSL) are enriched in pro residues. Residues 394-419 (HVSSVTQNQKQYDTSSKTHSNSQQGT) show a composition bias toward polar residues. Residues 423–439 (LEDDLQLSDSEDSDSEQ) are compositionally biased toward acidic residues. Residues 442–453 (EKPPSSSAPPSA) are compositionally biased toward pro residues. Positions 454 to 472 (PQSLPEPVASAHSSSAESE) are enriched in low complexity. Acidic residues predominate over residues 473 to 497 (STSDSDSSSDSESESSSSDSEENEP). Residues 536–546 (EPPRRHPESKG) are compositionally biased toward basic and acidic residues. Residues 586–602 (QKSPAQQEPPQRQTVGT) are compositionally biased toward polar residues. Phosphoserine is present on serine 588. Position 681 is an N6-acetyllysine (lysine 681). A compositionally biased stretch (basic and acidic residues) spans 688 to 699 (PAKDNVEDRTPE). Threonine 697 carries the phosphothreonine modification. Over residues 707-724 (TESQGPPHSGSGSRTSGC) the composition is skewed to polar residues. Positions 732–747 (EDSRKDRLPLPLRDTK) are enriched in basic and acidic residues. Serine 750 carries the post-translational modification Phosphoserine. Threonine 755 carries the post-translational modification Phosphothreonine. Residues 816-834 (GEAERDCDNKKIRLEKEIK) show a composition bias toward basic and acidic residues. Low complexity predominate over residues 871–880 (SSSSQKPAKP). The segment covering 906–932 (NHKDSSIPKQRRVEGKGSRSSSEHKGS) has biased composition (basic and acidic residues). Positions 1110–1119 (PASSVGSQSS) are enriched in low complexity.

It belongs to the AF4 family. As to quaternary structure, component of the super elongation complex (SEC), at least composed of EAF1, EAF2, CDK9, MLLT3/AF9, AFF (AFF1 or AFF4), the P-TEFb complex and ELL (ELL, ELL2 or ELL3).

The protein resides in the nucleus. This is AF4/FMR2 family member 1 (AFF1) from Homo sapiens (Human).